Consider the following 573-residue polypeptide: Dihydroxy-acid dehydratase (573 aa).

Cys62 lines the [2Fe-2S] cluster pocket. Asp94 contributes to the Mg(2+) binding site. Position 135 (Cys135) interacts with [2Fe-2S] cluster. The Mg(2+) site is built by Asp136 and Lys137. Lys137 is modified (N6-carboxylysine). A [2Fe-2S] cluster-binding site is contributed by Cys212. Glu463 serves as a coordination point for Mg(2+). Ser489 functions as the Proton acceptor in the catalytic mechanism.

It belongs to the IlvD/Edd family. Homodimer. [2Fe-2S] cluster is required as a cofactor. It depends on Mg(2+) as a cofactor.

It catalyses the reaction (2R)-2,3-dihydroxy-3-methylbutanoate = 3-methyl-2-oxobutanoate + H2O. It carries out the reaction (2R,3R)-2,3-dihydroxy-3-methylpentanoate = (S)-3-methyl-2-oxopentanoate + H2O. The protein operates within amino-acid biosynthesis; L-isoleucine biosynthesis; L-isoleucine from 2-oxobutanoate: step 3/4. Its pathway is amino-acid biosynthesis; L-valine biosynthesis; L-valine from pyruvate: step 3/4. Functionally, functions in the biosynthesis of branched-chain amino acids. Catalyzes the dehydration of (2R,3R)-2,3-dihydroxy-3-methylpentanoate (2,3-dihydroxy-3-methylvalerate) into 2-oxo-3-methylpentanoate (2-oxo-3-methylvalerate) and of (2R)-2,3-dihydroxy-3-methylbutanoate (2,3-dihydroxyisovalerate) into 2-oxo-3-methylbutanoate (2-oxoisovalerate), the penultimate precursor to L-isoleucine and L-valine, respectively. The polypeptide is Dihydroxy-acid dehydratase (Arthrobacter sp. (strain FB24)).